The primary structure comprises 815 residues: Phosphate transporter PHO1-2 (815 aa).

Residues 1-421 lie on the Cytoplasmic side of the membrane; the sequence is MVKFSREYEA…QQPRNTHMIT (421 aa). The region spanning 2–368 is the SPX domain; it reads VKFSREYEAS…EQQRATDLFS (367 aa). Disordered regions lie at residues 83–108, 166–213, and 242–266; these read SAGQQPSASEDEECPDRGELVRSTDK, RGLA…LELQ, and AGKKDGKTKDGSGKGRGGGGGGGGG. Over residues 97–108 the composition is skewed to basic and acidic residues; sequence PDRGELVRSTDK. Residues 183 to 201 show a composition bias toward low complexity; sequence PPSSVHGSSGRYLLSGLSS. Positions 202 to 213 are enriched in polar residues; sequence PQSMSDGSLELQ. Positions 243–254 are enriched in basic and acidic residues; that stretch reads GKKDGKTKDGSG. The segment covering 255–266 has biased composition (gly residues); that stretch reads KGRGGGGGGGGG. The chain crosses the membrane as a helical span at residues 422 to 442; it reads FLVGLFTGTFVSLFIIYAILA. Residues 443 to 458 are Extracellular-facing; it reads HVSGIFTSTGNSAYME. The chain crosses the membrane as a helical span at residues 459–479; sequence IVYHVFSMFALISLHIFLYGC. Residues 480-508 lie on the Cytoplasmic side of the membrane; sequence NLFMWKNTRINHNFIFDFSSNTALTHRDA. Residues 509–529 form a helical membrane-spanning segment; that stretch reads FLMSASIMCTVVAALVINLFL. The Extracellular portion of the chain corresponds to 530–538; sequence KNAGVAYAN. The chain crosses the membrane as a helical span at residues 539–559; sequence ALPGALLLLSTGVLFCPFDIF. Topologically, residues 560-686 are cytoplasmic; the sequence is YRSTRYCFMR…VRFKYAATPT (127 aa). The EXS domain maps to 624-815; the sequence is TSGQQYKHLA…PLPFRELETD (192 aa). A helical membrane pass occupies residues 687 to 707; that stretch reads PFWVWMVIISSSGATIYQLYW. Topologically, residues 708–734 are extracellular; that stretch reads DFVKDWGFLNPKSKNRWLRNELILKNK. A helical transmembrane segment spans residues 735–751; that stretch reads SIYYVSMMLNLALRLAW. Residues 752–815 are Cytoplasmic-facing; sequence TESVMKIHIG…PLPFRELETD (64 aa).

The protein belongs to the SYG1 (TC 2.A.94) family. As to expression, specifically expressed in roots.

It is found in the cell membrane. Functionally, involved in the transfer of inorganic phosphate (Pi) from roots to shoots. This Oryza sativa subsp. japonica (Rice) protein is Phosphate transporter PHO1-2 (PHO1-2).